Consider the following 58-residue polypeptide: Potassium channel toxin alpha-KTx 26.2 (58 aa).

An N-terminal signal peptide occupies residues 1–19; sequence MKTIFVVILVLFVLSAMLA. Cystine bridges form between Cys-31/Cys-49, Cys-35/Cys-54, and Cys-39/Cys-56.

It belongs to the short scorpion toxin superfamily. Potassium channel inhibitor family. Alpha-KTx 26 subfamily. In terms of tissue distribution, expressed by the venom gland.

The protein localises to the secreted. Inhibits voltage-gated potassium channels. This Lychas mucronatus (Chinese swimming scorpion) protein is Potassium channel toxin alpha-KTx 26.2.